The primary structure comprises 164 residues: PTS system sorbose-specific EIIB component (164 aa).

The region spanning 1-164 (MIITLARVDD…AKIDEVFGKE (164 aa)) is the PTS EIIB type-4 domain. Histidine 14 functions as the Pros-phosphohistidine intermediate in the catalytic mechanism. Histidine 14 is modified (phosphohistidine; by EIIA).

Its subcellular location is the cytoplasm. It carries out the reaction keto-L-sorbose(out) + N(pros)-phospho-L-histidyl-[protein] = L-sorbose 1-phosphate(in) + L-histidyl-[protein]. Its function is as follows. The phosphoenolpyruvate-dependent sugar phosphotransferase system (PTS), a major carbohydrate active transport system, catalyzes the phosphorylation of incoming sugar substrates concomitant with their translocation across the cell membrane. The enzyme II SorABCD PTS system is involved in L-sorbose transport. This chain is PTS system sorbose-specific EIIB component, found in Lacticaseibacillus casei (Lactobacillus casei).